We begin with the raw amino-acid sequence, 141 residues long: S-adenosylmethionine decarboxylase proenzyme (141 aa).

The active-site Schiff-base intermediate with substrate; via pyruvic acid is Ser63. The residue at position 63 (Ser63) is a Pyruvic acid (Ser); by autocatalysis. The active-site Proton acceptor; for processing activity is the His68. The active-site Proton donor; for catalytic activity is the Cys83.

It belongs to the prokaryotic AdoMetDC family. Type 1 subfamily. In terms of assembly, heterotetramer of two alpha and two beta chains arranged as a dimer of alpha/beta heterodimers. Requires pyruvate as cofactor. In terms of processing, is synthesized initially as an inactive proenzyme. Formation of the active enzyme involves a self-maturation process in which the active site pyruvoyl group is generated from an internal serine residue via an autocatalytic post-translational modification. Two non-identical subunits are generated from the proenzyme in this reaction, and the pyruvate is formed at the N-terminus of the alpha chain, which is derived from the carboxyl end of the proenzyme. The post-translation cleavage follows an unusual pathway, termed non-hydrolytic serinolysis, in which the side chain hydroxyl group of the serine supplies its oxygen atom to form the C-terminus of the beta chain, while the remainder of the serine residue undergoes an oxidative deamination to produce ammonia and the pyruvoyl group blocking the N-terminus of the alpha chain.

It carries out the reaction S-adenosyl-L-methionine + H(+) = S-adenosyl 3-(methylsulfanyl)propylamine + CO2. It participates in amine and polyamine biosynthesis; S-adenosylmethioninamine biosynthesis; S-adenosylmethioninamine from S-adenosyl-L-methionine: step 1/1. Functionally, catalyzes the decarboxylation of S-adenosylmethionine to S-adenosylmethioninamine (dcAdoMet), the propylamine donor required for the synthesis of the polyamines spermine and spermidine from the diamine putrescine. The polypeptide is S-adenosylmethionine decarboxylase proenzyme (Thermococcus onnurineus (strain NA1)).